A 278-amino-acid chain; its full sequence is Dehydrogenase/reductase SDR family member 4 (278 aa).

36–60 (LVTASTDGIGFAIARRLAQDGAHVV) serves as a coordination point for NADP(+). N6-acetyllysine; alternate is present on Lys92. The residue at position 92 (Lys92) is an N6-succinyllysine; alternate. N6-acetyllysine is present on Lys105. Residue Ser169 participates in substrate binding. Tyr182 functions as the Proton acceptor in the catalytic mechanism. An NADP(+)-binding site is contributed by Lys186. Position 216 is an N6-acetyllysine; alternate (Lys216). At Lys216 the chain carries N6-succinyllysine; alternate. Position 220 is a phosphoserine (Ser220). N6-succinyllysine is present on residues Lys227 and Lys234. A Peroxisomal targeting signal motif is present at residues 276–278 (SRL).

Belongs to the short-chain dehydrogenases/reductases (SDR) family. Homotetramer.

The protein resides in the peroxisome. The enzyme catalyses a secondary alcohol + NADP(+) = a ketone + NADPH + H(+). It carries out the reaction 3beta-hydroxy-5beta-pregnane-20-one + NADP(+) = 5beta-pregnan-3,20-dione + NADPH + H(+). The catalysed reaction is 5beta-dihydrotestosterone + NADPH + H(+) = 5beta-androstane-3beta,17beta-diol + NADP(+). It catalyses the reaction 5beta-androstane-3,17-dione + NADPH + H(+) = 3beta-hydroxy-5beta-androstane-17-one + NADP(+). The enzyme catalyses isatin + NADPH + H(+) = 3-hydroxyindolin-2-one + NADP(+). It carries out the reaction lithocholate + NADP(+) = 3-oxo-5beta-cholan-24-oate + NADPH + H(+). The catalysed reaction is 3-oxo-5beta-cholan-24-oate + NADPH + H(+) = isolithocholate + NADP(+). Functionally, NADPH-dependent oxidoreductase which catalyzes the reduction of a variety of compounds bearing carbonyl groups including ketosteroids, alpha-dicarbonyl compounds, aldehydes, aromatic ketones and quinones. Reduces 3-ketosteroids and benzil into 3beta-hydroxysteroids and R-benzoin, respectively, in contrast to the stereoselectivity of non-primate DHRS4s which produce 3alpha-hydroxysteroids and S-benzoin. Diplays low activity toward all-trans-retinal and no activity toward 9-cis-retinal as compared to non-primate mammals. In the reverse reaction, catalyze the NAD-dependent oxidation of 3beta-hydroxysteroids and alcohol, but with much lower efficiency. Involved in the metabolism of 3beta-hydroxysteroids, isatin and xenobiotic carbonyl compounds. The sequence is that of Dehydrogenase/reductase SDR family member 4 (DHRS4) from Pongo abelii (Sumatran orangutan).